We begin with the raw amino-acid sequence, 404 residues long: Cysteine desulfurase IscS (404 aa).

Residues 73–74 (AT), Asn153, Gln181, and 201–203 (SAH) each bind pyridoxal 5'-phosphate. The residue at position 204 (Lys204) is an N6-(pyridoxal phosphate)lysine. Thr241 contacts pyridoxal 5'-phosphate. Catalysis depends on Cys327, which acts as the Cysteine persulfide intermediate. Cys327 is a [2Fe-2S] cluster binding site.

Belongs to the class-V pyridoxal-phosphate-dependent aminotransferase family. NifS/IscS subfamily. Homodimer. Forms a heterotetramer with IscU, interacts with other sulfur acceptors. Pyridoxal 5'-phosphate is required as a cofactor.

It localises to the cytoplasm. The catalysed reaction is (sulfur carrier)-H + L-cysteine = (sulfur carrier)-SH + L-alanine. It functions in the pathway cofactor biosynthesis; iron-sulfur cluster biosynthesis. Master enzyme that delivers sulfur to a number of partners involved in Fe-S cluster assembly, tRNA modification or cofactor biosynthesis. Catalyzes the removal of elemental sulfur atoms from cysteine to produce alanine. Functions as a sulfur delivery protein for Fe-S cluster synthesis onto IscU, an Fe-S scaffold assembly protein, as well as other S acceptor proteins. The polypeptide is Cysteine desulfurase IscS (Anaeromyxobacter sp. (strain K)).